The following is a 136-amino-acid chain: Group 1 truncated hemoglobin GlbN (136 aa).

Position 81 (His81) interacts with heme.

Belongs to the truncated hemoglobin family. Group I subfamily. As to quaternary structure, homodimer. Heme serves as cofactor.

Binds oxygen cooperatively with very high affinity because of a fast combination and a slow dissociation rate. This chain is Group 1 truncated hemoglobin GlbN (glbN), found in Mycolicibacterium paratuberculosis (strain ATCC BAA-968 / K-10) (Mycobacterium paratuberculosis).